The following is a 225-amino-acid chain: 7-cyano-7-deazaguanine synthase (225 aa).

9-19 (YSGGLDSTTCL) contributes to the ATP binding site. Positions 188, 198, 201, and 204 each coordinate Zn(2+).

Belongs to the QueC family. It depends on Zn(2+) as a cofactor.

The enzyme catalyses 7-carboxy-7-deazaguanine + NH4(+) + ATP = 7-cyano-7-deazaguanine + ADP + phosphate + H2O + H(+). It functions in the pathway purine metabolism; 7-cyano-7-deazaguanine biosynthesis. In terms of biological role, catalyzes the ATP-dependent conversion of 7-carboxy-7-deazaguanine (CDG) to 7-cyano-7-deazaguanine (preQ(0)). This is 7-cyano-7-deazaguanine synthase from Citrifermentans bemidjiense (strain ATCC BAA-1014 / DSM 16622 / JCM 12645 / Bem) (Geobacter bemidjiensis).